A 153-amino-acid polypeptide reads, in one-letter code: Pheromone-binding protein Gp-9 (153 aa).

The first 19 residues, 1 to 19 (MKTFVLHIFIFALVAFASA), serve as a signal peptide directing secretion. 3 disulfides stabilise this stretch: Cys-37–Cys-77, Cys-73–Cys-129, and Cys-118–Cys-138.

This sequence belongs to the PBP/GOBP family. As to quaternary structure, homodimer.

Its subcellular location is the secreted. In terms of biological role, colony queen number, a major feature of social organization, is associated with worker genotype for Gp-9. Colonies are headed by either a single reproductive queen (monogyne form) or multiple queens (polygyne form). Differences in worker Gp-9 genotypes between social forms may cause differences in workers' abilities to recognize queens and regulate their numbers. The polypeptide is Pheromone-binding protein Gp-9 (Solenopsis sp. (strain B0-153) (Fire ant)).